Reading from the N-terminus, the 71-residue chain is UPF0434 protein APH_0052 (71 aa).

Positions 52–63 are enriched in basic and acidic residues; sequence RKLQPEEPKEGS. The segment at 52–71 is disordered; it reads RKLQPEEPKEGSELQSSDNQ.

This sequence belongs to the UPF0434 family.

The chain is UPF0434 protein APH_0052 from Anaplasma phagocytophilum (strain HZ).